A 1310-amino-acid chain; its full sequence is Cadherin-related family member 2 (1310 aa).

The N-terminal stretch at 1-20 (MAQLWLSCFLLPALVVSVAA) is a signal peptide. The Extracellular segment spans residues 21-1154 (NVAPKFLANM…ESDLSKQLIS (1134 aa)). Cadherin domains are found at residues 27–124 (LANM…APVF), 125–241 (QNTA…DPQF), and 242–353 (VREF…KPEF). N-linked (GlcNAc...) asparagine glycosylation is found at Asn-29, Asn-134, Asn-182, Asn-188, Asn-195, Asn-300, Asn-355, Asn-371, Asn-401, Asn-460, Asn-565, Asn-600, Asn-616, Asn-632, Asn-680, Asn-696, Asn-701, Asn-775, Asn-821, Asn-871, Asn-877, Asn-911, Asn-932, and Asn-1107. Cadherin domains are found at residues 368 to 480 (AQVN…RPTF), 481 to 586 (PQSL…APVV), 586 to 695 (VSGS…LPIF), 696 to 808 (NQSS…PPTL), 810 to 928 (VASL…APYF), and 930 to 1058 (PENK…TPKE). Residues 1155–1175 (VIIGLGVALLLVLVIMTMAFV) traverse the membrane as a helical segment. The Cytoplasmic segment spans residues 1176–1310 (CVRKSYNRKL…TNAGLDTTDL (135 aa)). The tract at residues 1180 to 1310 (SYNRKLQAMK…TNAGLDTTDL (131 aa)) is mediates interaction with USH1C and MYO7B and is required for proper localization to microvilli tips and function in microvilli organization. Ser-1248 is modified (phosphoserine). Residues 1259-1268 (NSQEIKEHRP) are compositionally biased toward basic and acidic residues. The disordered stretch occupies residues 1259-1310 (NSQEIKEHRPPHTPPEPDPEPLSVVLLGRQAGASGQLEGPSYTNAGLDTTDL). Ser-1299 carries the post-translational modification Phosphoserine. Positions 1299–1310 (SYTNAGLDTTDL) are enriched in polar residues.

As to quaternary structure, part of the IMAC/intermicrovillar adhesion complex/intermicrovillar tip-link complex composed of ANKS4B, MYO7B, USH1C, CDHR2 and CDHR5. Interacts with MAST2. Interacts (via cytoplasmic domain) with USH1C and MYO7B; required for proper localization of CDHR2 to microvilli tips and its function in brush border differentiation. Highly expressed in liver, kidney and colon. Moderately expressed in small intestine. Down-regulated in a number of liver and colon cancers. Expressed in duodenum with higher expression in enterocytes along the villus axis and lower expression in crypts (at protein level).

It localises to the apical cell membrane. Its subcellular location is the cell projection. It is found in the microvillus membrane. The protein localises to the cell junction. Functionally, intermicrovillar adhesion molecule that forms, via its extracellular domain, calcium-dependent heterophilic complexes with CDHR5 on adjacent microvilli. Thereby, controls the packing of microvilli at the apical membrane of epithelial cells. Through its cytoplasmic domain, interacts with microvillus cytoplasmic proteins to form the intermicrovillar adhesion complex/IMAC. This complex plays a central role in microvilli and epithelial brush border differentiation. May also play a role in cell-cell adhesion and contact inhibition in epithelial cells. The polypeptide is Cadherin-related family member 2 (Homo sapiens (Human)).